The chain runs to 2057 residues: Protein TIC 214 (2057 aa).

The next 4 helical transmembrane spans lie at 13–33 (KIIN…AFSI), 62–82 (LIMG…HIAL), 158–178 (LFVT…CEFF), and 206–226 (SDYF…HSFG). Residues 248–340 (LILKGTDEEE…RVIQEKERKS (93 aa)) adopt a coiled-coil conformation. Residues 288–302 (NHLKKKKDRQKKQGT) show a composition bias toward basic residues. Disordered regions lie at residues 288-316 (NHLK…NSNT), 614-807 (ETHT…EEKG), 890-910 (DEQT…NDRV), 1597-1634 (EEEE…TNND), and 1724-1817 (KKKN…KSLS). 2 stretches are compositionally biased toward basic and acidic residues: residues 621 to 657 (ATDK…KETK) and 665 to 702 (NTVD…KETK). Residues 704-713 (NASKETNTVN) are compositionally biased toward polar residues. 2 stretches are compositionally biased toward basic and acidic residues: residues 714–807 (KETK…EEKG) and 891–900 (EQTKREEKPK). A compositionally biased stretch (acidic residues) spans 1597 to 1619 (EEEEINPEEEINPEEEINPEEEI). A compositionally biased stretch (polar residues) spans 1622–1634 (SSNQKTPIGTNND). Residues 1753-1817 (TNSEKKSKTN…ETDSEKKSLS (65 aa)) show a composition bias toward basic and acidic residues.

This sequence belongs to the TIC214 family. In terms of assembly, part of the Tic complex.

Its subcellular location is the plastid. The protein localises to the chloroplast inner membrane. In terms of biological role, involved in protein precursor import into chloroplasts. May be part of an intermediate translocation complex acting as a protein-conducting channel at the inner envelope. This chain is Protein TIC 214, found in Ipomoea purpurea (Common morning glory).